We begin with the raw amino-acid sequence, 316 residues long: Phosphatidylinositol mannoside acyltransferase (316 aa).

The Proton acceptor role is filled by histidine 137. The hexadecanoyl-CoA site is built by histidine 137 and arginine 175. Glutamate 211 is a catalytic residue. Glutamate 240 lines the hexadecanoyl-CoA pocket.

The protein belongs to the LpxL/LpxM/LpxP family.

Its subcellular location is the cell inner membrane. It catalyses the reaction a 2,6-O-bis(alpha-D-mannopyranosyl)-1-phosphatidyl-1D-myo-inositol + an acyl-CoA = a 2-O-(alpha-D-mannosyl)-6-O-(6-O-acyl-alpha-D-mannosyl)-1-phosphatidyl-1D-myo-inositol + CoA. The catalysed reaction is a 1,2-diacyl-sn-glycero-3-phospho-[alpha-D-mannopyranosyl-(1&lt;-&gt;6)-D-myo-inositol] + an acyl-CoA = a 1,2-diacyl-sn-glycero-3-phospho-[alpha-D-6-acyl-mannopyranosyl-(1&lt;-&gt;6)-D-myo-inositol] + CoA. The protein operates within phospholipid metabolism; phosphatidylinositol metabolism. Catalyzes the transfer of a palmitoyl moiety from palmitoyl-CoA to the 6-position of the mannose ring linked to the 2-position of myo-inositol in phosphatidyl-myo-inositol monomannoside (PIM1) or dimannoside (PIM2). In Mycobacterium tuberculosis (strain CDC 1551 / Oshkosh), this protein is Phosphatidylinositol mannoside acyltransferase.